We begin with the raw amino-acid sequence, 230 residues long: TorCAD operon transcriptional regulatory protein TorR (230 aa).

Residues 4–117 (HIVIVEDEPV…ELVVRVKNLL (114 aa)) form the Response regulatory domain. Residue Asp-53 is modified to 4-aspartylphosphate. Positions 132-227 (DNCYRFAGYC…QHGEGYFLAA (96 aa)) form a DNA-binding region, ompR/PhoB-type.

As to quaternary structure, interacts with TorI. TorI binds to the effector domain of TorR. This interaction, which does not interfere with TorR DNA binding activity, probably prevents the recruitment of RNA polymerase to the torCAD promoter. In terms of processing, phosphorylated and dephosphorylated by TorS.

Its subcellular location is the cytoplasm. Functionally, member of the two-component regulatory system TorS/TorR involved in the anaerobic utilization of trimethylamine-N-oxide (TMAO). Phosphorylated TorR activates the transcription of the torCAD operon by binding to four decameric boxes located in the torCAD promoter. Box1, 2 and 4 contain the DNA sequence 5'-CTGTTCATAT-3' and box3 contains the DNA sequence 5'-CCGTTCATCC-3'. Phosphorylated as well as unphosphorylated TorR negatively regulates its own expression by binding to box1 and 2. The protein is TorCAD operon transcriptional regulatory protein TorR (torR) of Escherichia coli (strain K12).